The chain runs to 549 residues: Cytochrome bc1 complex cytochrome b subunit (549 aa).

The helical transmembrane segment at 54 to 74 (VCLYSFIIIILTGVYLTLFFH) threads the bilayer. Residues His-118 and His-132 each contribute to the heme site. A run of 3 helical transmembrane segments spans residues 122 to 142 (ALIF…TGAF), 150 to 170 (WLFG…GYSL), and 182 to 202 (FMEG…FFLF). Positions 219 and 234 each coordinate heme. A run of 5 helical transmembrane segments spans residues 220 to 240 (ILLL…LVFY), 269 to 289 (AGGF…IATI), 334 to 354 (LVLG…AIAV), 389 to 409 (FGVA…NDLW), and 417 to 437 (INAI…VAFI).

The protein belongs to the cytochrome b family. As to quaternary structure, the cytochrome bc1 complex is composed of a cytochrome b (QcrB), the Rieske iron-sulfur protein (QcrA) and a diheme cytochrome c (QcrC) subunit. Heme serves as cofactor.

It localises to the cell membrane. It catalyses the reaction a quinol + 2 Fe(III)-[cytochrome c](out) = a quinone + 2 Fe(II)-[cytochrome c](out) + 2 H(+)(out). Cytochrome b subunit of the cytochrome bc1 complex, an essential component of the respiratory electron transport chain required for ATP synthesis. The bc1 complex catalyzes the oxidation of ubiquinol and the reduction of cytochrome c in the respiratory chain. The bc1 complex operates through a Q-cycle mechanism that couples electron transfer to generation of the proton gradient that drives ATP synthesis. The cytochrome b subunit contains two ubiquinol reactive sites: the oxidation (QP) site and the reduction (QN) site. The sequence is that of Cytochrome bc1 complex cytochrome b subunit (qcrB) from Streptomyces lividans.